The primary structure comprises 122 residues: Large ribosomal subunit protein uL14 (122 aa).

Belongs to the universal ribosomal protein uL14 family. In terms of assembly, part of the 50S ribosomal subunit. Forms a cluster with proteins L3 and L19. In the 70S ribosome, L14 and L19 interact and together make contacts with the 16S rRNA in bridges B5 and B8.

Functionally, binds to 23S rRNA. Forms part of two intersubunit bridges in the 70S ribosome. This is Large ribosomal subunit protein uL14 from Streptomyces griseus subsp. griseus (strain JCM 4626 / CBS 651.72 / NBRC 13350 / KCC S-0626 / ISP 5235).